Here is a 231-residue protein sequence, read N- to C-terminus: MSNTPIELKGSSFTLSVVHLHEAEPKVIHQALEDKIAQAPAFLKHAPVVLNVSALEDPVNWSAMHKAVSATGLRVIGVSGCKDAQLKAEIEKMGLPILTEGKEKAPRPAPAPQAPAQNTTPVTKTRLIDTPVRSGQRIYAPQCDLIVTSHVSAGAELIADGNIHVYGMMRGRALAGASGDRETQIFCTNLMAELVSIAGEYWLSDQIPAEFYGKAARLQLVENALTVQPLN.

The interval 102–125 is disordered; sequence KEKAPRPAPAPQAPAQNTTPVTKT.

The protein belongs to the MinC family. In terms of assembly, interacts with MinD and FtsZ.

Its function is as follows. Cell division inhibitor that blocks the formation of polar Z ring septums. Rapidly oscillates between the poles of the cell to destabilize FtsZ filaments that have formed before they mature into polar Z rings. Prevents FtsZ polymerization. The sequence is that of Probable septum site-determining protein MinC from Escherichia coli O139:H28 (strain E24377A / ETEC).